The following is a 561-amino-acid chain: Proline--tRNA ligase (561 aa).

Belongs to the class-II aminoacyl-tRNA synthetase family. ProS type 1 subfamily. In terms of assembly, homodimer.

Its subcellular location is the cytoplasm. It catalyses the reaction tRNA(Pro) + L-proline + ATP = L-prolyl-tRNA(Pro) + AMP + diphosphate. Catalyzes the attachment of proline to tRNA(Pro) in a two-step reaction: proline is first activated by ATP to form Pro-AMP and then transferred to the acceptor end of tRNA(Pro). As ProRS can inadvertently accommodate and process non-cognate amino acids such as alanine and cysteine, to avoid such errors it has two additional distinct editing activities against alanine. One activity is designated as 'pretransfer' editing and involves the tRNA(Pro)-independent hydrolysis of activated Ala-AMP. The other activity is designated 'posttransfer' editing and involves deacylation of mischarged Ala-tRNA(Pro). The misacylated Cys-tRNA(Pro) is not edited by ProRS. This Thermosipho africanus (strain TCF52B) protein is Proline--tRNA ligase.